Reading from the N-terminus, the 179-residue chain is Peptidyl-tRNA hydrolase 2, mitochondrial (179 aa).

Residues 10-32 (YLTNPGALSLAAGVACGVCLGWG) form a helical membrane-spanning segment. Glycyl lysine isopeptide (Lys-Gly) (interchain with G-Cter in ubiquitin) cross-links involve residues K76, K81, K95, K106, K115, K171, and K177.

It belongs to the PTH2 family. As to quaternary structure, monomer. Post-translationally, ubiquitinated by PRKN during mitophagy, leading to its degradation and enhancement of mitophagy. Deubiquitinated by USP30.

It localises to the mitochondrion outer membrane. The enzyme catalyses an N-acyl-L-alpha-aminoacyl-tRNA + H2O = an N-acyl-L-amino acid + a tRNA + H(+). In terms of biological role, peptidyl-tRNA hydrolase which releases tRNAs from the ribosome during protein synthesis. Promotes caspase-independent apoptosis by regulating the function of two transcriptional regulators, AES and TLE1. This is Peptidyl-tRNA hydrolase 2, mitochondrial (PTRH2) from Bos taurus (Bovine).